A 298-amino-acid chain; its full sequence is ATP synthase F(1) complex subunit gamma, mitochondrial (298 aa).

A mitochondrion-targeting transit peptide spans 1–25; the sequence is MFSRAGVAGLSAWTLQPQWIQVRNM. Lys39 bears the N6-acetyllysine mark. Lys49 carries the post-translational modification N6-succinyllysine. Lys55 bears the N6-acetyllysine mark. Lys115 is modified (N6-acetyllysine; alternate). An N6-succinyllysine; alternate modification is found at Lys115. Phosphoserine is present on Ser146. Lys154 is modified (N6-acetyllysine; alternate). Residue Lys154 is modified to N6-succinyllysine; alternate. An N6-acetyllysine modification is found at Lys197. N6-succinyllysine is present on Lys270.

It belongs to the ATPase gamma chain family. Component of the ATP synthase complex composed at least of ATP5F1A/subunit alpha, ATP5F1B/subunit beta, ATP5MC1/subunit c (homooctomer), MT-ATP6/subunit a, MT-ATP8/subunit 8, ATP5ME/subunit e, ATP5MF/subunit f, ATP5MG/subunit g, ATP5MK/subunit k, ATP5MJ/subunit j, ATP5F1C/subunit gamma, ATP5F1D/subunit delta, ATP5F1E/subunit epsilon, ATP5PF/subunit F6, ATP5PB/subunit b, ATP5PD/subunit d, ATP5PO/subunit OSCP. ATP synthase complex consists of a soluble F(1) head domain (subunits alpha(3) and beta(3)) - the catalytic core - and a membrane F(0) domain - the membrane proton channel (subunits c, a, 8, e, f, g, k and j). These two domains are linked by a central stalk (subunits gamma, delta, and epsilon) rotating inside the F1 region and a stationary peripheral stalk (subunits F6, b, d, and OSCP). Interacts with FLVCR2; this interaction occurs in the absence of heme and is disrupted upon heme binding.

Its subcellular location is the mitochondrion inner membrane. Functionally, subunit gamma, of the mitochondrial membrane ATP synthase complex (F(1)F(0) ATP synthase or Complex V) that produces ATP from ADP in the presence of a proton gradient across the membrane which is generated by electron transport complexes of the respiratory chain. ATP synthase complex consist of a soluble F(1) head domain - the catalytic core - and a membrane F(1) domain - the membrane proton channel. These two domains are linked by a central stalk rotating inside the F(1) region and a stationary peripheral stalk. During catalysis, ATP synthesis in the catalytic domain of F(1) is coupled via a rotary mechanism of the central stalk subunits to proton translocation. In vivo, can only synthesize ATP although its ATP hydrolase activity can be activated artificially in vitro. With the central stalk subunit delta, is essential for the biogenesis of F(1) catalytic part of the ATP synthase complex namely in the formation of F1 assembly intermediate. This is ATP synthase F(1) complex subunit gamma, mitochondrial from Macaca fascicularis (Crab-eating macaque).